We begin with the raw amino-acid sequence, 265 residues long: GTP cyclohydrolase FolE2 (265 aa).

Belongs to the GTP cyclohydrolase IV family.

The enzyme catalyses GTP + H2O = 7,8-dihydroneopterin 3'-triphosphate + formate + H(+). It participates in cofactor biosynthesis; 7,8-dihydroneopterin triphosphate biosynthesis; 7,8-dihydroneopterin triphosphate from GTP: step 1/1. Converts GTP to 7,8-dihydroneopterin triphosphate. This Bordetella bronchiseptica (strain ATCC BAA-588 / NCTC 13252 / RB50) (Alcaligenes bronchisepticus) protein is GTP cyclohydrolase FolE2.